The chain runs to 251 residues: Triosephosphate isomerase (251 aa).

9-11 (NWK) contributes to the substrate binding site. Catalysis depends on His-95, which acts as the Electrophile. Glu-167 acts as the Proton acceptor in catalysis. Substrate contacts are provided by residues Gly-173, Ser-213, and 234–235 (GG).

It belongs to the triosephosphate isomerase family. As to quaternary structure, homodimer.

The protein resides in the cytoplasm. It carries out the reaction D-glyceraldehyde 3-phosphate = dihydroxyacetone phosphate. Its pathway is carbohydrate biosynthesis; gluconeogenesis. The protein operates within carbohydrate degradation; glycolysis; D-glyceraldehyde 3-phosphate from glycerone phosphate: step 1/1. Functionally, involved in the gluconeogenesis. Catalyzes stereospecifically the conversion of dihydroxyacetone phosphate (DHAP) to D-glyceraldehyde-3-phosphate (G3P). The chain is Triosephosphate isomerase from Pelobacter propionicus (strain DSM 2379 / NBRC 103807 / OttBd1).